The primary structure comprises 613 residues: Probable hydrolase clz13 (613 aa).

The signal sequence occupies residues 1–25 (MCLLSMRFTVAILLVLLSHCGGSHA). Residues asparagine 61, asparagine 89, asparagine 286, asparagine 422, asparagine 456, asparagine 477, and asparagine 581 are each glycosylated (N-linked (GlcNAc...) asparagine).

The protein belongs to the beta-lactamase family.

The protein operates within secondary metabolite biosynthesis. In terms of biological role, probable hydrolase; part of the gene cluster that mediates the biosynthesis of squalestatin S1 (SQS1, also known as zaragozic acid A), a heavily oxidized fungal polyketide that offers potent cholesterol lowering activity by targeting squalene synthase (SS). SQS1 is composed of a 2,8-dioxobicyclic[3.2.1]octane-3,4,5-tricarboxyclic acid core that is connected to two lipophilic polyketide arms. These initial steps feature the priming of an unusual benzoic acid starter unit onto the highly reducing polyketide synthase clz14, followed by oxaloacetate extension and product release to generate a tricarboxylic acid containing product. The phenylalanine ammonia lyase (PAL) clz10 and the acyl-CoA ligase clz12 are involved in transforming phenylalanine into benzoyl-CoA. The citrate synthase-like protein clz17 is involved in connecting the C-alpha-carbons of the hexaketide chain and oxaloacetate to afford the tricarboxylic acid unit. The potential hydrolytic enzymes, clz11 and clz13, are in close proximity to pks2 and may participate in product release. On the other side, the tetraketide arm is synthesized by a the squalestatin tetraketide synthase clz2 and enzymatically esterified to the core in the last biosynthetic step, by the acetyltransferase clz6. The biosynthesis of the tetraketide must involve 3 rounds of chain extension. After the first and second rounds methyl-transfer occurs, and in all rounds of extension the ketoreductase and dehydratase are active. The enoyl reductase and C-MeT of clz2 are not active in the final round of extension. The acetyltransferase clz6 appears to have a broad substrate selectivity for its acyl CoA substrate, allowing the in vitro synthesis of novel squalestatins. The biosynthesis of SQS1 requires several oxidative steps likely performed by oxidoreductases clz3, clz15 and clz16. Finally, in support of the identification of the cluster as being responsible for SQS1 production, the cluster contains a gene encoding a putative squalene synthase (SS) clz20, suggesting a likely mechanism for self-resistance. This chain is Probable hydrolase clz13, found in Cochliobolus lunatus (Filamentous fungus).